We begin with the raw amino-acid sequence, 683 residues long: Methionine--tRNA ligase (683 aa).

Residues 15–25 (PYANGPIHLGH) carry the 'HIGH' region motif. Zn(2+) is bound by residues cysteine 146, cysteine 149, cysteine 159, and cysteine 162. Positions 332 to 336 (KMSKS) match the 'KMSKS' region motif. Lysine 335 is an ATP binding site. A tRNA-binding domain is found at 581-683 (DFCKVDLRVA…AGAKAGQRVK (103 aa)).

It belongs to the class-I aminoacyl-tRNA synthetase family. MetG type 1 subfamily. Homodimer. The cofactor is Zn(2+).

The protein localises to the cytoplasm. The enzyme catalyses tRNA(Met) + L-methionine + ATP = L-methionyl-tRNA(Met) + AMP + diphosphate. Functionally, is required not only for elongation of protein synthesis but also for the initiation of all mRNA translation through initiator tRNA(fMet) aminoacylation. The sequence is that of Methionine--tRNA ligase from Histophilus somni (strain 2336) (Haemophilus somnus).